The sequence spans 2098 residues: 1-phosphatidylinositol 3-phosphate 5-kinase (2098 aa).

The tract at residues 1–45 (MATDDKTSPTLDSANDLPRSPTSPSHLTHFKPLTPDQDEPPFKSA) is disordered. An N-acetylalanine modification is found at Ala-2. A phosphoserine; by autocatalysis mark is found at Ser-23 and Ser-48. The segment at 57-123 (KERAEGGQGE…EPTFGGHDPR (67 aa)) is disordered. Polar residues predominate over residues 66–88 (EQQPLSGSWTSPQLPSRTQSVRS). Position 88 is a phosphoserine (Ser-88). The FYVE-type zinc finger occupies 158–218 (DSQCKECYDC…ACTYCRKIAL (61 aa)). Zn(2+)-binding residues include Cys-164, Cys-167, Cys-180, Cys-183, Cys-188, Cys-191, Cys-210, and Cys-213. The disordered stretch occupies residues 292–329 (VQEDAGKSPARNRSASITNLSLDRSGSPMVPSYETSVS). A phosphoserine mark is found at Ser-299, Ser-307, and Ser-312. The segment covering 302-315 (RNRSASITNLSLDR) has biased composition (polar residues). Ser-318 carries the post-translational modification Phosphoserine; by PKB/AKT1 or PKB/AKT2. The residue at position 329 (Ser-329) is a Phosphoserine. The region spanning 365 to 440 (HSSGMEFQDH…DEYALYRPLQ (76 aa)) is the DEP domain. Residues 442 to 459 (TEFSETPSPDSDSVNSVE) are compositionally biased toward polar residues. The tract at residues 442-469 (TEFSETPSPDSDSVNSVEGHSEPSWFKD) is disordered. Positions 460–469 (GHSEPSWFKD) are enriched in basic and acidic residues. Ser-475 carries the phosphoserine modification. The interval 484-505 (GDDNLANSASPSKRTSVSSFQS) is disordered. Over residues 488–505 (LANSASPSKRTSVSSFQS) the composition is skewed to polar residues. Residues 616–868 (MMALLQQLLH…MICVAYHSQL (253 aa)) form a chaperonin-like domain region. Disordered regions lie at residues 1161–1191 (RIQP…NEGD) and 1512–1616 (FQQE…STDS). The segment covering 1177-1186 (SSTSSGQSGS) has biased composition (low complexity). The residue at position 1522 (Ser-1522) is a Phosphoserine; by autocatalysis. Ser-1544 and Ser-1549 each carry phosphoserine. The segment covering 1562 to 1578 (LTTLSSQSSTSSTHLQL) has biased composition (low complexity). Ser-1669 is modified (phosphoserine; by autocatalysis). The tract at residues 1692 to 1799 (QWNSAEEGLP…PQDEVDGGDT (108 aa)) is disordered. Low complexity predominate over residues 1704-1714 (STSDSRPKSSS). Polar residues predominate over residues 1723-1735 (GGQTNRTTETEPQ). The residue at position 1754 (Ser-1754) is a Phosphoserine. In terms of domain architecture, PIPK spans 1758-2084 (SSQKRETLRG…RFCEAMDKYF (327 aa)). Residues 1842–2098 (EEDFIRSLSH…DHWTGLGLNC (257 aa)) are catalytic. A phosphoserine; by autocatalysis mark is found at Ser-1969 and Ser-2053.

As to quaternary structure, component of the PI(3,5)P2 regulatory complex/PAS complex, at least composed of PIKFYVE, FIG4 and VAC14. VAC14 nucleates the assembly of the complex and serves as a scaffold by pentamerizing into a star-shaped structure, which can bind a single copy each of PIKFYVE and FIG4 and coordinates their activities. Interacts (via chaperonin-like domain) with RABEPK; the interaction recruits RABEPK to the endosomal membrane. Interacts with SPAG9. Interacts with EGFR. Post-translationally, autophosphorylates which inhibits its own phosphatidylinositol 3-phosphate 5-kinase activity, stimulates FIG4 lipid phosphatase activity and down-regulates lipid product formation. Dephosphorylated by FIG4 in the PI(3,5)P2 regulatory complex, at Ser-48, Ser-1669 and Ser-2053. Phosphorylated in response to insulin at Ser-318 in a protein kinase B (PKB)-dependent manner.

The protein resides in the endosome membrane. It is found in the early endosome membrane. Its subcellular location is the cytoplasmic vesicle. It localises to the phagosome membrane. The protein localises to the late endosome membrane. It carries out the reaction a 1,2-diacyl-sn-glycero-3-phospho-(1D-myo-inositol-3-phosphate) + ATP = a 1,2-diacyl-sn-glycero-3-phospho-(1D-myo-inositol-3,5-bisphosphate) + ADP + H(+). The enzyme catalyses a 1,2-diacyl-sn-glycero-3-phospho-(1D-myo-inositol) + ATP = a 1,2-diacyl-sn-glycero-3-phospho-(1D-myo-inositol-5-phosphate) + ADP + H(+). It catalyses the reaction L-seryl-[protein] + ATP = O-phospho-L-seryl-[protein] + ADP + H(+). Its activity is regulated as follows. Inhibited by apilimod and YM201636. Functionally, dual specificity kinase implicated in myriad essential cellular processes such as maintenance of endomembrane homeostasis, and endocytic-vacuolar pathway, lysosomal trafficking, nuclear transport, stress- or hormone-induced signaling and cell cycle progression. The PI(3,5)P2 regulatory complex regulates both the synthesis and turnover of phosphatidylinositol 3,5-bisphosphate (PtdIns(3,5)P2). Sole enzyme to catalyze the phosphorylation of phosphatidylinositol 3-phosphate on the fifth hydroxyl of the myo-inositol ring, to form (PtdIns(3,5)P2). Also catalyzes the phosphorylation of phosphatidylinositol on the fifth hydroxyl of the myo-inositol ring, to form phosphatidylinositol 5-phosphate (PtdIns(5)P). Has serine-protein kinase activity and is able to autophosphorylate and transphosphorylate. Autophosphorylation inhibits its own phosphatidylinositol 3-phosphate 5-kinase activity, stimulates FIG4 lipid phosphatase activity and down-regulates lipid product formation. Involved in key endosome operations such as fission and fusion in the course of endosomal cargo transport. Required for the maturation of early into late endosomes, phagosomes and lysosomes. Regulates vacuole maturation and nutrient recovery following engulfment of macromolecules, initiates the redistribution of accumulated lysosomal contents back into the endosome network. Critical regulator of the morphology, degradative activity, and protein turnover of the endolysosomal system in macrophages and platelets. In neutrophils, critical to perform chemotaxis, generate ROS, and undertake phagosome fusion with lysosomes. Plays a key role in the processing and presentation of antigens by major histocompatibility complex class II (MHC class II) mediated by CTSS. Regulates melanosome biogenesis by controlling the delivery of proteins from the endosomal compartment to the melanosome. Essential for systemic glucose homeostasis, mediates insulin-induced signals for endosome/actin remodeling in the course of GLUT4 translocation/glucose uptake activation. Supports microtubule-based endosome-to-trans-Golgi network cargo transport, through association with SPAG9 and RABEPK. Mediates EGFR trafficking to the nucleus. In terms of biological role, (Microbial infection) Required for cell entry of coronaviruses SARS-CoV and SARS-CoV-2, as well as human coronavirus EMC (HCoV-EMC) by endocytosis. The protein is 1-phosphatidylinositol 3-phosphate 5-kinase of Homo sapiens (Human).